We begin with the raw amino-acid sequence, 57 residues long: Conotoxin Cal6.34 (57 aa).

Positions 1–22 (MKLTCVLIVAVLILTACQVIAA) are cleaved as a signal peptide. Cystine bridges form between Cys26/Cys37, Cys29/Cys43, and Cys36/Cys54.

This sequence belongs to the conotoxin O1 superfamily. Expressed by the venom duct.

It is found in the secreted. Probable neurotoxin. The sequence is that of Conotoxin Cal6.34 from Californiconus californicus (California cone).